We begin with the raw amino-acid sequence, 332 residues long: N-acetyl-gamma-glutamyl-phosphate reductase (332 aa).

Cysteine 144 is an active-site residue.

This sequence belongs to the NAGSA dehydrogenase family. Type 1 subfamily.

It is found in the cytoplasm. It carries out the reaction N-acetyl-L-glutamate 5-semialdehyde + phosphate + NADP(+) = N-acetyl-L-glutamyl 5-phosphate + NADPH + H(+). Its pathway is amino-acid biosynthesis; L-arginine biosynthesis; N(2)-acetyl-L-ornithine from L-glutamate: step 3/4. Its function is as follows. Catalyzes the NADPH-dependent reduction of N-acetyl-5-glutamyl phosphate to yield N-acetyl-L-glutamate 5-semialdehyde. The chain is N-acetyl-gamma-glutamyl-phosphate reductase from Archaeoglobus fulgidus (strain ATCC 49558 / DSM 4304 / JCM 9628 / NBRC 100126 / VC-16).